The sequence spans 228 residues: Triosephosphate isomerase (228 aa).

9 to 11 (NFK) provides a ligand contact to substrate. The Electrophile role is filled by H93. E141 (proton acceptor) is an active-site residue. Substrate-binding positions include I146, G181, and 202 to 203 (AS).

The protein belongs to the triosephosphate isomerase family. As to quaternary structure, homotetramer; dimer of dimers.

It localises to the cytoplasm. The catalysed reaction is D-glyceraldehyde 3-phosphate = dihydroxyacetone phosphate. It functions in the pathway carbohydrate biosynthesis; gluconeogenesis. Its pathway is carbohydrate degradation; glycolysis; D-glyceraldehyde 3-phosphate from glycerone phosphate: step 1/1. Functionally, involved in the gluconeogenesis. Catalyzes stereospecifically the conversion of dihydroxyacetone phosphate (DHAP) to D-glyceraldehyde-3-phosphate (G3P). This Pyrobaculum calidifontis (strain DSM 21063 / JCM 11548 / VA1) protein is Triosephosphate isomerase.